Here is a 134-residue protein sequence, read N- to C-terminus: UPF0412 protein YaaI (134 aa).

Residues 1–23 (MRSVLTISVGLLFGLALSSVAHA) form the signal peptide.

This sequence belongs to the UPF0412 family.

The chain is UPF0412 protein YaaI from Salmonella typhimurium (strain LT2 / SGSC1412 / ATCC 700720).